We begin with the raw amino-acid sequence, 201 residues long: MGAYKYLEELAKKKQSDVNLFLSRVRAWEYRQMNVIHRASRPSRPDKARRLGYKAKQGYVIYRIRVRRGGRKRPVPKGQTYGKPVHQGVNHLKYQRSARCTAEERVGRYCSNLRVLNSYWVNQDATYKFFEVILVDPSHKAIRRDPRINWIVNPVHKHRESRGLTSIGKKSRGIGKGHRFNNSPQHATWLRHNTLSLRRYR.

Residues 161–182 (SRGLTSIGKKSRGIGKGHRFNN) form a disordered region. Positions 169 to 179 (KKSRGIGKGHR) are enriched in basic residues.

The protein belongs to the eukaryotic ribosomal protein eL15 family. Component of the large ribosomal subunit (LSU). Mature yeast ribosomes consist of a small (40S) and a large (60S) subunit. The 40S small subunit contains 1 molecule of ribosomal RNA (18S rRNA) and at least 33 different proteins. The large 60S subunit contains 3 rRNA molecules (25S, 5.8S and 5S rRNA) and at least 46 different proteins.

It localises to the cytoplasm. Its subcellular location is the nucleus. The protein resides in the nucleolus. Component of the ribosome, a large ribonucleoprotein complex responsible for the synthesis of proteins in the cell. The small ribosomal subunit (SSU) binds messenger RNAs (mRNAs) and translates the encoded message by selecting cognate aminoacyl-transfer RNA (tRNA) molecules. The large subunit (LSU) contains the ribosomal catalytic site termed the peptidyl transferase center (PTC), which catalyzes the formation of peptide bonds, thereby polymerizing the amino acids delivered by tRNAs into a polypeptide chain. The nascent polypeptides leave the ribosome through a tunnel in the LSU and interact with protein factors that function in enzymatic processing, targeting, and the membrane insertion of nascent chains at the exit of the ribosomal tunnel. This chain is Large ribosomal subunit protein eL15A (rpl15), found in Schizosaccharomyces pombe (strain 972 / ATCC 24843) (Fission yeast).